A 149-amino-acid polypeptide reads, in one-letter code: Transcriptional repressor NrdR (149 aa).

A zinc finger spans residues 3–34 (CPFCAAVDTKVIDSRLVGDGSQVRRRRQCLEC). Positions 49-139 (PRVIKSDDIR…VYRSFEDIRE (91 aa)) constitute an ATP-cone domain.

It belongs to the NrdR family. It depends on Zn(2+) as a cofactor.

Negatively regulates transcription of bacterial ribonucleotide reductase nrd genes and operons by binding to NrdR-boxes. This is Transcriptional repressor NrdR from Photorhabdus laumondii subsp. laumondii (strain DSM 15139 / CIP 105565 / TT01) (Photorhabdus luminescens subsp. laumondii).